The primary structure comprises 32 residues: Corticostatin-related peptide RK-1 (32 aa).

Intrachain disulfides connect Cys3–Cys29, Cys5–Cys19, and Cys9–Cys28.

It is found in the secreted. In terms of biological role, has antimicrobial activity against E.coli and activates ion channel activity. This chain is Corticostatin-related peptide RK-1, found in Oryctolagus cuniculus (Rabbit).